The chain runs to 874 residues: Alanine--tRNA ligase (874 aa).

Zn(2+)-binding residues include H563, H567, C665, and H669.

The protein belongs to the class-II aminoacyl-tRNA synthetase family. Requires Zn(2+) as cofactor.

Its subcellular location is the cytoplasm. It carries out the reaction tRNA(Ala) + L-alanine + ATP = L-alanyl-tRNA(Ala) + AMP + diphosphate. Functionally, catalyzes the attachment of alanine to tRNA(Ala) in a two-step reaction: alanine is first activated by ATP to form Ala-AMP and then transferred to the acceptor end of tRNA(Ala). Also edits incorrectly charged Ser-tRNA(Ala) and Gly-tRNA(Ala) via its editing domain. The polypeptide is Alanine--tRNA ligase (Histophilus somni (strain 129Pt) (Haemophilus somnus)).